The primary structure comprises 291 residues: MQPRRIARELALLGVNQLPATAAKLSEKQLEDLLLAAIRALSEETHETLSTAAAEIQRSDRLLHESDPLLLADSDPKEEGGSRSVTLRLHQAQRHLQRLEITLKEAKVPNPNALRGEVLELIQQVQVALSNAGQALEHLEQRLHSVRHILDEVVQLSQRAVNRVGVALSMPELLYIAQSQEVRAYALQLLTALRTHKEAIDARLQKALVGWQLQRVGRIERDILRLAVVEMEILASSPVKVAINEAVELAKKYGDPEAAAFVNGVLRRVVDSQMETHRGRDPSLPGSGSGG.

The protein belongs to the NusB family.

Involved in transcription antitermination. Required for transcription of ribosomal RNA (rRNA) genes. Binds specifically to the boxA antiterminator sequence of the ribosomal RNA (rrn) operons. In Synechococcus sp. (strain JA-2-3B'a(2-13)) (Cyanobacteria bacterium Yellowstone B-Prime), this protein is Transcription antitermination protein NusB.